A 1503-amino-acid chain; its full sequence is ATP-binding cassette sub-family C member 6 (1503 aa).

Over 1 to 31 (MAAPAEPCAGQGVWNQTEPEPAATSLLSLCF) the chain is Extracellular. A glycan (N-linked (GlcNAc...) asparagine) is linked at asparagine 15. A helical membrane pass occupies residues 32–52 (LRTAGVWVPPMYLWVLGPIYL). Over 53-72 (LFIHHHGRGYLRMSPLFKAK) the chain is Cytoplasmic. The helical transmembrane segment at 73–93 (MVLGFALIVLCTSSVAVALWK) threads the bilayer. Over 94 to 98 (IQQGT) the chain is Extracellular. Residues 99–119 (PEAPEFLIHPTVWLTTMSFAV) traverse the membrane as a helical segment. At 120–131 (FLIHTERKKGVQ) the chain is on the cytoplasmic side. The helical transmembrane segment at 132–149 (SSGVLFGYWLLCFVLPAT) threads the bilayer. The Extracellular portion of the chain corresponds to 150–167 (NAAQQASGAGFQSDPVRH). The chain crosses the membrane as a helical span at residues 168–188 (LSTYLCLSLVVAQFVLSCLAD). Residues 189–302 (QPPFFPEDPQ…GSQWRPLLKA (114 aa)) are Cytoplasmic-facing. Residues 303-323 (IWQVFHSTFLLGTLSLIISDV) form a helical membrane-spanning segment. The 283-residue stretch at 311-593 (FLLGTLSLII…LPFSIHSLVQ (283 aa)) folds into the ABC transmembrane type-1 1 domain. Residues 324-349 (FRFTVPKLLSLFLEFIGDPKPPAWKG) lie on the Extracellular side of the membrane. A helical transmembrane segment spans residues 350–370 (YLLAVLMFLSACLQTLFEQQN). The Cytoplasmic portion of the chain corresponds to 371 to 426 (MYRLKVLQMRLRSAITGLVYRKVLALSSGSRKASAVGDVVNLVSVDVQRLTESVLY). A helical transmembrane segment spans residues 427–447 (LNGLWLPLVWIVVCFVYLWQL). Topologically, residues 448–450 (LGP) are extracellular. The chain crosses the membrane as a helical span at residues 451–471 (SALTAIAVFLSLLPLNFFISK). At 472 to 533 (KRNHHQEEQM…ALRTSGLLFS (62 aa)) the chain is on the cytoplasmic side. The helical transmembrane segment at 534-554 (VSLVSFQVSTFLVALVVFAVH) threads the bilayer. Residues 555-575 (TLVAENAMNAEKAFVTLTVLN) are Extracellular-facing. A helical transmembrane segment spans residues 576–596 (ILNKAQAFLPFSIHSLVQARV). The Cytoplasmic portion of the chain corresponds to 597–939 (SFDRLVTFLC…VKATVHLAYL (343 aa)). An ABC transporter 1 domain is found at 629–853 (ITIHSATFAW…KGALMCLLDQ (225 aa)). 663-670 (GPVGAGKS) lines the ATP pocket. Residues 854–919 (ARQPGDRGEG…LDDPDRAGWP (66 aa)) form a disordered region. A compositionally biased stretch (basic and acidic residues) spans 881-901 (RRPELRRERSIKSVPEKDRTT). A helical transmembrane segment spans residues 940-960 (RAVGTPLCLYALFLFLCQQVA). The 282-residue stretch at 947 to 1228 (CLYALFLFLC…VVRNWTDLEN (282 aa)) folds into the ABC transmembrane type-1 2 domain. Over 961-997 (SFCRGYWLSLWADDPAVGGQQTQAALRGGIFGLLGCL) the chain is Extracellular. Residues 998–1018 (QAIGLFASMAAVLLGGARASR) form a helical membrane-spanning segment. Topologically, residues 1019 to 1061 (LLFQRLLWDVVRSPISFFERTPIGHLLNRFSKETDTVDVDIPD) are cytoplasmic. The chain crosses the membrane as a helical span at residues 1062 to 1082 (KLRSLLMYAFGLLEVSLVVAV). Residue alanine 1083 is a topological domain, extracellular. A helical membrane pass occupies residues 1084 to 1104 (TPLATVAILPLFLLYAGFQSL). At 1105–1175 (YVVSSCQLRR…VADRWLAANV (71 aa)) the chain is on the cytoplasmic side. A helical transmembrane segment spans residues 1176-1196 (ELLGNGLVFAAATCAVLSKAH). Topologically, residues 1197–1198 (LS) are extracellular. A helical transmembrane segment spans residues 1199 to 1219 (AGLVGFSVSAALQVTQTLQWV). The Cytoplasmic segment spans residues 1220–1503 (VRNWTDLENS…YRLAQESGLV (284 aa)). Residues 1265–1499 (IEFRDFGLRY…KGLFYRLAQE (235 aa)) enclose the ABC transporter 2 domain. Serine 1286 carries the post-translational modification Phosphoserine. An ATP-binding site is contributed by 1299-1306 (GRTGAGKS).

The protein belongs to the ABC transporter superfamily. ABCC family. Conjugate transporter (TC 3.A.1.208) subfamily. It depends on Mg(2+) as a cofactor. Post-translationally, glycosylated. Expressed in kidney and liver. Very low expression in other tissues. In testis, localized to peritubular myoid cells, Leydig cells, along the basal membrane of Sertoli cells and moderately in the adluminal compartment of the seminiferous tubules.

The protein resides in the basal cell membrane. The protein localises to the basolateral cell membrane. It localises to the endoplasmic reticulum membrane. The catalysed reaction is an S-substituted glutathione(in) + ATP + H2O = an S-substituted glutathione(out) + ADP + phosphate + H(+). It carries out the reaction leukotriene C4(in) + ATP + H2O = leukotriene C4(out) + ADP + phosphate + H(+). With respect to regulation, LTC4 transport is completely inhibited by 1 mM orthovanadate. In terms of biological role, ATP-dependent transporter of the ATP-binding cassette (ABC) family that actively extrudes physiological compounds, and xenobiotics from cells. Mediates ATP-dependent transport of glutathione conjugates such as leukotriene-c4 (LTC4) and N-ethylmaleimide S-glutathione (NEM-GS) (in vitro), and an anionic cyclopentapeptide endothelin antagonist, BQ-123. May contribute to regulate the transport of organic compounds in testes across the blood-testis-barrier. Does not appear to actively transport drugs outside the cell. Confers low levels of cellular resistance to etoposide, teniposide, anthracyclines and cisplatin. Functionally, mediates the release of nucleoside triphosphates, predominantly ATP, into the circulation, where it is rapidly converted into AMP and the mineralization inhibitor inorganic pyrophosphate (PPi) by the ecto-enzyme ectonucleotide pyrophosphatase phosphodiesterase 1 (ENPP1), therefore playing a role in PPi homeostasis. Inhibits TNF-alpha-mediated apoptosis through blocking one or more caspases. This chain is ATP-binding cassette sub-family C member 6 (ABCC6), found in Homo sapiens (Human).